Here is a 793-residue protein sequence, read N- to C-terminus: Protein smoothened (793 aa).

An N-terminal signal peptide occupies residues 1–30 (MAAGRPVRGPELAPRRLLQLLLLVLLGGRG). Residues 31-237 (RGAALSGNVT…EAEHQDMHSY (207 aa)) are Extracellular-facing. Residues 35 to 61 (LSGNVTGPGPRSAGGSARRNAPVTSPP) form a disordered region. Residue asparagine 38 is glycosylated (N-linked (GlcNAc...) asparagine). 5 cysteine pairs are disulfide-bonded: cysteine 68/cysteine 182, cysteine 74/cysteine 138, cysteine 82/cysteine 131, cysteine 122/cysteine 158, and cysteine 151/cysteine 173. Positions 69–185 (GRAAHCEPLR…DHFPEGCPNE (117 aa)) constitute an FZ domain. A cholesterol-binding site is contributed by aspartate 99. Asparagine 192 carries an N-linked (GlcNAc...) asparagine glycan. Intrachain disulfides connect cysteine 197/cysteine 217, cysteine 221/cysteine 299, and cysteine 318/cysteine 394. The helical transmembrane segment at 238–258 (IAAFGAVTGLCTLFTLATFVA) threads the bilayer. The Cytoplasmic portion of the chain corresponds to 259–266 (DWRNSNRY). The helical transmembrane segment at 267–287 (PAVILFYVNACFFVGSIGWLA) threads the bilayer. The Extracellular portion of the chain corresponds to 288–318 (QFMDGARREIVCRADGTMRFGEPTSSETLSC). The chain crosses the membrane as a helical span at residues 319 to 339 (VIIFVIVYYALMAGVVWFVVL). The Cytoplasmic segment spans residues 340–362 (TYAWHTSFKALGTTYQPLSGKTS). The helical transmembrane segment at 363–383 (YFHLLTWSLPFVLTVAILAVA) threads the bilayer. Over 384-406 (QVDGDSVSGICFVGYKNYRYRAG) the chain is Extracellular. Cholesterol is bound at residue tyrosine 398. The helical transmembrane segment at 407-427 (FVLAPIGLVLIVGGYFLIRGV) threads the bilayer. Over 428–455 (MTLFSIKSNHPGLLSEKAASKINETMLR) the chain is Cytoplasmic. The chain crosses the membrane as a helical span at residues 456–476 (LGIFGFLAFGFVLITFSCHFY). Topologically, residues 477 to 528 (DFFNQAEWERSFRDYVLCQANVTIGLPTKKPIPDCEIKNRPSLLVEKINLFA) are extracellular. Cysteine 494 and cysteine 511 are joined by a disulfide. An N-linked (GlcNAc...) asparagine glycan is attached at asparagine 497. A helical membrane pass occupies residues 529–549 (MFGTGIAMSTWVWTKATLLIW). Positions 542 to 573 (TKATLLIWRRTWCRLTGHSDDEPKRIKKSKMI) are interaction with BBS5 and BBS7. The Cytoplasmic segment spans residues 550-793 (RRTWCRLTGH…AELLDADSDF (244 aa)). Residues serine 560, serine 578, and serine 594 each carry the phosphoserine modification. Positions 574–657 (AKAFSKRREL…TPVPPEEQAN (84 aa)) are required for interaction with PRKACA. Residues 585-597 (QNPGQELSFSMHT) are interaction with DLG5. Position 597 is a phosphothreonine (threonine 597). Serine 599 and serine 642 each carry phosphoserine. Threonine 644 and threonine 648 each carry phosphothreonine. A Phosphoserine modification is found at serine 666. The span at 674–684 (GRKKKRRKRKK) shows a compositional bias: basic residues. Residues 674-702 (GRKKKRRKRKKEVCPLGPAPELHHSAPVP) are disordered.

The protein belongs to the G-protein coupled receptor Fz/Smo family. Homodimer. Interacts (via C-terminus) with protein kinase A catalytic subunit PRKACA; interacts with free PRKACA subunits and the interaction leads to sequestration of PRKACA at the membrane, preventing PRKACA-mediated phosphorylation of GLI transcription factors. Interacts with ARRB2. Interacts with KIF7. Interacts with BBS5 and BBS7; the interactions are indicative for the association of SMO with the BBsome complex to facilitate ciliary localization of SMO. Interacts with DLG5 and SDCBP. Interacts with GAS8/DRC4. Post-translationally, phosphorylation by GRK kinases is required for interaction with protein kinase A catalytic subunit PRKACA. In embryo, found in the early neural folds and neural tube, pre-somitic mesoderm and somites, developing limb bud, gut, eye, testes, cartilage, muscle, lung, epiglottis, thymus, tongue, jaw, taste buds, teeth, and skin. In adult, found in multiple tissues including heart, brain, liver, lung, skeletal muscle, kidney and testis.

The protein resides in the cell membrane. It localises to the cell projection. The protein localises to the cilium. Functionally, g protein-coupled receptor which associates with the patched protein (PTCH) to transduce hedgehog protein signaling. Binding of sonic hedgehog (SHH) to its receptor patched prevents inhibition of smoothened (SMO) by patched. When active, SMO binds to and sequesters protein kinase A catalytic subunit PRKACA at the cell membrane, preventing PRKACA-mediated phosphorylation of GLI transcription factors which releases the GLI proteins from PRKACA-mediated inhibition and allows for transcriptional activation of hedgehog pathway target genes. Required for the accumulation of KIF7, GLI2 and GLI3 in the cilia. Interacts with DLG5 at the ciliary base to induce the accumulation of KIF7 and GLI2 at the ciliary tip for GLI2 activation. The protein is Protein smoothened (Smo) of Rattus norvegicus (Rat).